A 434-amino-acid chain; its full sequence is Histidinol dehydrogenase (434 aa).

Residues Tyr130, Gln188, and Asn211 each contribute to the NAD(+) site. Residues Ser237, Gln259, and His262 each contribute to the substrate site. Gln259 and His262 together coordinate Zn(2+). Residues Glu326 and His327 each act as proton acceptor in the active site. Positions 327, 360, 414, and 419 each coordinate substrate. Asp360 contacts Zn(2+). Position 419 (His419) interacts with Zn(2+).

This sequence belongs to the histidinol dehydrogenase family. Homodimer. The cofactor is Zn(2+).

The enzyme catalyses L-histidinol + 2 NAD(+) + H2O = L-histidine + 2 NADH + 3 H(+). It functions in the pathway amino-acid biosynthesis; L-histidine biosynthesis; L-histidine from 5-phospho-alpha-D-ribose 1-diphosphate: step 9/9. In terms of biological role, catalyzes the sequential NAD-dependent oxidations of L-histidinol to L-histidinaldehyde and then to L-histidine. The protein is Histidinol dehydrogenase of Escherichia coli O6:H1 (strain CFT073 / ATCC 700928 / UPEC).